We begin with the raw amino-acid sequence, 224 residues long: Probable Brix domain-containing ribosomal biogenesis protein (224 aa).

Residues 1 to 196 (MMLITTSHRP…IWIMEDGRRW (196 aa)) form the Brix domain.

Functionally, probably involved in the biogenesis of the ribosome. The protein is Probable Brix domain-containing ribosomal biogenesis protein of Pyrococcus abyssi (strain GE5 / Orsay).